A 143-amino-acid chain; its full sequence is Transcriptional regulator MraZ (143 aa).

SpoVT-AbrB domains lie at 5–47 (EYQH…PMSE) and 76–119 (ATEC…SKEI).

This sequence belongs to the MraZ family. Forms oligomers.

Its subcellular location is the cytoplasm. The protein resides in the nucleoid. The sequence is that of Transcriptional regulator MraZ from Bacillus licheniformis (strain ATCC 14580 / DSM 13 / JCM 2505 / CCUG 7422 / NBRC 12200 / NCIMB 9375 / NCTC 10341 / NRRL NRS-1264 / Gibson 46).